Here is a 472-residue protein sequence, read N- to C-terminus: 3-isopropylmalate dehydratase large subunit (472 aa).

[4Fe-4S] cluster is bound by residues Cys353, Cys414, and Cys417.

Belongs to the aconitase/IPM isomerase family. LeuC type 1 subfamily. In terms of assembly, heterodimer of LeuC and LeuD. [4Fe-4S] cluster serves as cofactor.

The enzyme catalyses (2R,3S)-3-isopropylmalate = (2S)-2-isopropylmalate. The protein operates within amino-acid biosynthesis; L-leucine biosynthesis; L-leucine from 3-methyl-2-oxobutanoate: step 2/4. Functionally, catalyzes the isomerization between 2-isopropylmalate and 3-isopropylmalate, via the formation of 2-isopropylmaleate. This is 3-isopropylmalate dehydratase large subunit from Psychrobacter cryohalolentis (strain ATCC BAA-1226 / DSM 17306 / VKM B-2378 / K5).